We begin with the raw amino-acid sequence, 197 residues long: MRTATVTRNTLETQITVSLNLDGTGVGRFETGVPFLDHMMDQIARHGLIDLDVKAVGDLHIDAHHTVEDIGITLGQAFAKAIGDKKGIRRYGHAYVPLDEALSRVVIDLSGRPGLVYNVDYTRACIGQFDVDLFSEFFHGFVNHSMVTLHIDNLRGHNSHHQAETIFKAFGRALRMACEHDERMAGITPSTKGTLSV.

Belongs to the imidazoleglycerol-phosphate dehydratase family.

It localises to the cytoplasm. The catalysed reaction is D-erythro-1-(imidazol-4-yl)glycerol 3-phosphate = 3-(imidazol-4-yl)-2-oxopropyl phosphate + H2O. It participates in amino-acid biosynthesis; L-histidine biosynthesis; L-histidine from 5-phospho-alpha-D-ribose 1-diphosphate: step 6/9. The protein is Imidazoleglycerol-phosphate dehydratase of Chromobacterium violaceum (strain ATCC 12472 / DSM 30191 / JCM 1249 / CCUG 213 / NBRC 12614 / NCIMB 9131 / NCTC 9757 / MK).